We begin with the raw amino-acid sequence, 187 residues long: GTP cyclohydrolase 1 (187 aa).

C76, H79, and C148 together coordinate Zn(2+).

This sequence belongs to the GTP cyclohydrolase I family. In terms of assembly, homomer.

It catalyses the reaction GTP + H2O = 7,8-dihydroneopterin 3'-triphosphate + formate + H(+). It participates in cofactor biosynthesis; 7,8-dihydroneopterin triphosphate biosynthesis; 7,8-dihydroneopterin triphosphate from GTP: step 1/1. The chain is GTP cyclohydrolase 1 from Desulforamulus reducens (strain ATCC BAA-1160 / DSM 100696 / MI-1) (Desulfotomaculum reducens).